A 490-amino-acid polypeptide reads, in one-letter code: 2,3-bisphosphoglycerate-independent phosphoglycerate mutase (490 aa).

Mn(2+) contacts are provided by aspartate 9 and serine 59. Serine 59 functions as the Phosphoserine intermediate in the catalytic mechanism. Residues histidine 116, 145–146 (RD), arginine 175, arginine 181, 246–249 (RSDR), and lysine 319 contribute to the substrate site. The Mn(2+) site is built by aspartate 385, histidine 389, aspartate 426, histidine 427, and histidine 444.

Belongs to the BPG-independent phosphoglycerate mutase family. In terms of assembly, monomer. It depends on Mn(2+) as a cofactor.

It carries out the reaction (2R)-2-phosphoglycerate = (2R)-3-phosphoglycerate. It participates in carbohydrate degradation; glycolysis; pyruvate from D-glyceraldehyde 3-phosphate: step 3/5. Functionally, catalyzes the interconversion of 2-phosphoglycerate and 3-phosphoglycerate. This Helicobacter hepaticus (strain ATCC 51449 / 3B1) protein is 2,3-bisphosphoglycerate-independent phosphoglycerate mutase.